The chain runs to 131 residues: Ribosome-binding factor A (131 aa).

It belongs to the RbfA family. As to quaternary structure, monomer. Binds 30S ribosomal subunits, but not 50S ribosomal subunits or 70S ribosomes.

It localises to the cytoplasm. One of several proteins that assist in the late maturation steps of the functional core of the 30S ribosomal subunit. Associates with free 30S ribosomal subunits (but not with 30S subunits that are part of 70S ribosomes or polysomes). Required for efficient processing of 16S rRNA. May interact with the 5'-terminal helix region of 16S rRNA. The sequence is that of Ribosome-binding factor A from Mannheimia succiniciproducens (strain KCTC 0769BP / MBEL55E).